Consider the following 393-residue polypeptide: Eukaryotic translation initiation factor 5 (393 aa).

Residue Gly-28–Thr-35 participates in GTP binding. 2 disordered regions span residues Lys-144–Asp-179 and Glu-217–Ser-247. The W2 domain occupies Glu-223 to Glu-385. The segment covering Glu-224–Glu-233 has biased composition (acidic residues).

The protein belongs to the eIF-2-beta/eIF-5 family.

Functionally, catalyzes the hydrolysis of GTP bound to the 40S ribosomal initiation complex (40S.mRNA.Met-tRNA[F].eIF-2.GTP) with the subsequent joining of a 60S ribosomal subunit resulting in the release of eIF-2 and the guanine nucleotide. The subsequent joining of a 60S ribosomal subunit results in the formation of a functional 80S initiation complex (80S.mRNA.Met-tRNA[F]). The protein is Eukaryotic translation initiation factor 5 (eif5) of Dictyostelium discoideum (Social amoeba).